The chain runs to 645 residues: Acetyl-coenzyme A synthetase (645 aa).

CoA is bound by residues Arg-190 to Arg-193 and Thr-308. Residues Gly-384–Pro-386, Asp-408–Thr-413, Asp-497, and Arg-512 each bind ATP. Ser-520 lines the CoA pocket. Arg-523 serves as a coordination point for ATP. Val-534, His-536, and Val-539 together coordinate Mg(2+). Lys-606 carries the post-translational modification N6-acetyllysine.

It belongs to the ATP-dependent AMP-binding enzyme family. Mg(2+) serves as cofactor. Acetylated. Deacetylation by the SIR2-homolog deacetylase activates the enzyme.

The enzyme catalyses acetate + ATP + CoA = acetyl-CoA + AMP + diphosphate. Its function is as follows. Catalyzes the conversion of acetate into acetyl-CoA (AcCoA), an essential intermediate at the junction of anabolic and catabolic pathways. AcsA undergoes a two-step reaction. In the first half reaction, AcsA combines acetate with ATP to form acetyl-adenylate (AcAMP) intermediate. In the second half reaction, it can then transfer the acetyl group from AcAMP to the sulfhydryl group of CoA, forming the product AcCoA. The protein is Acetyl-coenzyme A synthetase of Alkalilimnicola ehrlichii (strain ATCC BAA-1101 / DSM 17681 / MLHE-1).